The chain runs to 513 residues: rRNA N(6)-adenosine-methyltransferase ZCCHC4 (513 aa).

Residues Cys-40, His-42, Cys-64, Cys-73, Cys-125, Cys-128, His-140, and His-143 each contribute to the Zn(2+) site. Residues 40-82 (CPHGPTLLFVKVTQGKEETRRFYACSACRDRKDCNFFQWEDEK) form a GRF-type zinc finger. Residues 172 to 175 (QYLF), Arg-202, Asp-225, 243 to 244 (NM), and Asp-276 each bind S-adenosyl-L-methionine. The tract at residues 337–357 (QVDYDNHALYKHGKTGRKQSP) is regulatory loop. Residues Cys-380, Cys-383, His-393, Cys-394, Cys-397, Cys-400, His-410, Cys-411, Cys-414, Cys-417, His-424, Cys-425, Cys-428, Cys-431, His-436, and Cys-438 each contribute to the Zn(2+) site. In terms of domain architecture, DHHC spans 395 to 447 (ELCNSCTSKDGRKWNHCFLCKKCVKPSWIHCSICNHCAVPDHSCEGPKHGCFI). Residues 443–460 (HGCFICGELDHKRSTCPN) form a CCHC-type zinc finger. The segment covering 466–481 (RANKAVRKQKQRKSNK) has biased composition (basic residues). Residues 466–513 (RANKAVRKQKQRKSNKMKMETTKGQSMNHTSATRRKKRRERAHQYLGS) are disordered. Residues 487-496 (TKGQSMNHTS) are compositionally biased toward polar residues. Over residues 497-506 (ATRRKKRRER) the composition is skewed to basic residues.

The protein belongs to the ZCCHC4 family. Interacts with components of the ASC-1 complex TRIP4, ASCC1, ASCC2 and ASCC3. Interact with AHCYL1 and AHCYL2. Interact with YTHDC2.

It localises to the nucleus. The protein resides in the nucleolus. The protein localises to the cytoplasm. The catalysed reaction is adenosine(4220) in 28S rRNA + S-adenosyl-L-methionine = N(6)-methyladenosine(4220) in 28S rRNA + S-adenosyl-L-homocysteine + H(+). Functionally, rRNA N6-methyltransferase that specifically methylates the adenine in position 4220 of 28S rRNA. N6-methylation of adenine(4220) in 28S rRNA is required for translation. The sequence is that of rRNA N(6)-adenosine-methyltransferase ZCCHC4 from Homo sapiens (Human).